The following is a 138-amino-acid chain: Microneme antigen L2 (138 aa).

PAN domains lie at 9 to 78 (CFAH…PRSC) and 82 to 138 (CSDA…SKRA). Intrachain disulfides connect Cys9–Cys78, Cys34–Cys56, Cys38–Cys44, Cys82–Cys86, Cys107–Cys127, and Cys111–Cys117. Ser18 contributes to the a carbohydrate binding site. Lys59, Tyr66, and Asp71 together coordinate a carbohydrate.

In terms of assembly, homodimer or heterodimer. Contains six disulfide bonds.

Its subcellular location is the cytoplasmic vesicle. It is found in the secretory vesicle. It localises to the microneme. Functionally, galactose-binding lectin. Plays a role in adhesion to the host cell. Has a potential role in invasion of host cells. The chain is Microneme antigen L2 from Sarcocystis muris.